A 301-amino-acid polypeptide reads, in one-letter code: Hydroxyquinol 1,2-dioxygenase (301 aa).

Tyr169, Tyr202, His226, and His228 together coordinate Fe cation.

Belongs to the intradiol ring-cleavage dioxygenase family. Fe(3+) is required as a cofactor.

It catalyses the reaction benzene-1,2,4-triol + O2 = maleylacetate + 2 H(+). It participates in aromatic compound metabolism. Involved in resorcinol degradation. Catalyzes the conversion of hydroxyquinol to malelylacetate. Also shows weak activity with catechol, 3-methylcatechol and 4-methylcatechol, but cannot use 4-chlorocatechol, 4-nitrocatechol or protocatechuate. This chain is Hydroxyquinol 1,2-dioxygenase, found in Corynebacterium glutamicum (strain ATCC 13032 / DSM 20300 / JCM 1318 / BCRC 11384 / CCUG 27702 / LMG 3730 / NBRC 12168 / NCIMB 10025 / NRRL B-2784 / 534).